Here is a 562-residue protein sequence, read N- to C-terminus: Urocanate hydratase (562 aa).

Residues 52-53, Gln130, 176-178, Glu196, Arg201, 242-243, 263-267, 273-274, and Tyr322 each bind NAD(+); these read GG, GMG, NA, QTSAH, and YL. Cys410 is an active-site residue. Gly492 contacts NAD(+).

The protein belongs to the urocanase family. The cofactor is NAD(+).

It is found in the cytoplasm. The enzyme catalyses 4-imidazolone-5-propanoate = trans-urocanate + H2O. It functions in the pathway amino-acid degradation; L-histidine degradation into L-glutamate; N-formimidoyl-L-glutamate from L-histidine: step 2/3. Functionally, catalyzes the conversion of urocanate to 4-imidazolone-5-propionate. This is Urocanate hydratase from Klebsiella pneumoniae subsp. pneumoniae (strain ATCC 700721 / MGH 78578).